The sequence spans 290 residues: MNVIRARTAGFCMGVSLALRKLDREVDRAEEKAAQGSPRCRIATFGPIIHNPQVLEAYAGMGVRCLRQVDEVEAGDHVVIRAHGVPQQQEKALRSRDAVVVDATCPKVKKAQLGIEEQCRAGRTLLLFGEAEHPEVRGLLSYAGEGALVFGSVDELEGLPLQPETEYFLAAQTTQDRVAFEVARAWLHERLGHEVPVLETICDATRLRQQEAIDIARKVDAMVVVGGFDSGNTRRLADVAAAQGVFTVHVENESQLPVEQLRGCGIIGLTAGASTPKSIIDATQRFLESL.

Cysteine 12 provides a ligand contact to [4Fe-4S] cluster. Residues histidine 50 and histidine 83 each coordinate (2E)-4-hydroxy-3-methylbut-2-enyl diphosphate. Dimethylallyl diphosphate-binding residues include histidine 50 and histidine 83. 2 residues coordinate isopentenyl diphosphate: histidine 50 and histidine 83. A [4Fe-4S] cluster-binding site is contributed by cysteine 105. Histidine 133 is a (2E)-4-hydroxy-3-methylbut-2-enyl diphosphate binding site. A dimethylallyl diphosphate-binding site is contributed by histidine 133. Residue histidine 133 coordinates isopentenyl diphosphate. Glutamate 135 acts as the Proton donor in catalysis. (2E)-4-hydroxy-3-methylbut-2-enyl diphosphate is bound at residue threonine 173. Cysteine 202 is a binding site for [4Fe-4S] cluster. Positions 230, 232, and 274 each coordinate (2E)-4-hydroxy-3-methylbut-2-enyl diphosphate. Residues serine 230, asparagine 232, and serine 274 each contribute to the dimethylallyl diphosphate site. Isopentenyl diphosphate is bound by residues serine 230, asparagine 232, and serine 274.

The protein belongs to the IspH family. Requires [4Fe-4S] cluster as cofactor.

The catalysed reaction is isopentenyl diphosphate + 2 oxidized [2Fe-2S]-[ferredoxin] + H2O = (2E)-4-hydroxy-3-methylbut-2-enyl diphosphate + 2 reduced [2Fe-2S]-[ferredoxin] + 2 H(+). The enzyme catalyses dimethylallyl diphosphate + 2 oxidized [2Fe-2S]-[ferredoxin] + H2O = (2E)-4-hydroxy-3-methylbut-2-enyl diphosphate + 2 reduced [2Fe-2S]-[ferredoxin] + 2 H(+). The protein operates within isoprenoid biosynthesis; dimethylallyl diphosphate biosynthesis; dimethylallyl diphosphate from (2E)-4-hydroxy-3-methylbutenyl diphosphate: step 1/1. It participates in isoprenoid biosynthesis; isopentenyl diphosphate biosynthesis via DXP pathway; isopentenyl diphosphate from 1-deoxy-D-xylulose 5-phosphate: step 6/6. Catalyzes the conversion of 1-hydroxy-2-methyl-2-(E)-butenyl 4-diphosphate (HMBPP) into a mixture of isopentenyl diphosphate (IPP) and dimethylallyl diphosphate (DMAPP). Acts in the terminal step of the DOXP/MEP pathway for isoprenoid precursor biosynthesis. The protein is 4-hydroxy-3-methylbut-2-enyl diphosphate reductase of Nitratidesulfovibrio vulgaris (strain ATCC 29579 / DSM 644 / CCUG 34227 / NCIMB 8303 / VKM B-1760 / Hildenborough) (Desulfovibrio vulgaris).